We begin with the raw amino-acid sequence, 767 residues long: Protein SQS1 (767 aa).

A compositionally biased stretch (basic residues) spans 1 to 17 (MAKRHSHYQGSRRRHAR). The interval 1–60 (MAKRHSHYQGSRRRHARGSNSKKAGRGNAKGIQGRKIKKKPTPTNSWHNSSIPLGEGDLD) is disordered. Residues 42-52 (TPTNSWHNSSI) show a composition bias toward polar residues. Ser105 carries the post-translational modification Phosphoserine. Residues 176-185 (EDSENEDDDS) are compositionally biased toward acidic residues. Positions 176–200 (EDSENEDDDSQNSPSTDHSLSSNES) are disordered. Phosphoserine occurs at positions 217, 255, 334, 343, and 345. Residues 466 to 493 (YSDIPISDSSDEGDSYEGDSYEDDEDMA) are disordered. Over residues 474–492 (SSDEGDSYEGDSYEDDEDM) the composition is skewed to acidic residues. In terms of domain architecture, R3H spans 594-656 (GLHIQNIKDE…HTSVVVEKIK (63 aa)). The G-patch domain maps to 720–767 (NENIGRRMLEKLGWKSGEGLGIQGNKGISEPIFAKIKKNRSGLRHSES).

It belongs to the SQS1 family.

It is found in the cytoplasm. The protein resides in the nucleus. May be involved in splicing since overexpression antagonizes the suppression of splicing defects by SPP382 mutants. In Saccharomyces cerevisiae (strain YJM789) (Baker's yeast), this protein is Protein SQS1 (SQS1).